The primary structure comprises 148 residues: Large ribosomal subunit protein bL9 (148 aa).

Belongs to the bacterial ribosomal protein bL9 family.

Its function is as follows. Binds to the 23S rRNA. The chain is Large ribosomal subunit protein bL9 from Pseudomonas aeruginosa (strain LESB58).